The chain runs to 275 residues: tRNA-splicing endonuclease subunit SEN34 (275 aa).

Catalysis depends on residues tyrosine 209, histidine 217, and lysine 250.

This sequence belongs to the tRNA-intron endonuclease family. Heterotetramer composed of SEN2, SEN15, SEN34 and SEN54. Interacts directly with SEN15.

The protein localises to the nucleus. The protein resides in the endomembrane system. It is found in the mitochondrion outer membrane. The catalysed reaction is pretRNA = a 3'-half-tRNA molecule with a 5'-OH end + a 5'-half-tRNA molecule with a 2',3'-cyclic phosphate end + an intron with a 2',3'-cyclic phosphate and a 5'-hydroxyl terminus.. Functionally, constitutes one of the two catalytic subunit of the tRNA-splicing endonuclease complex, a complex responsible for identification and cleavage of the splice sites in pre-tRNA. It cleaves pre-tRNA at the 5'- and 3'-splice sites to release the intron. The products are an intron and two tRNA half-molecules bearing 2',3'-cyclic phosphate and 5'-OH termini. There are no conserved sequences at the splice sites, but the intron is invariably located at the same site in the gene, placing the splice sites an invariant distance from the constant structural features of the tRNA body. It probably carries the active site for 3'-splice site cleavage. The protein is tRNA-splicing endonuclease subunit SEN34 (SEN34) of Saccharomyces cerevisiae (strain ATCC 204508 / S288c) (Baker's yeast).